A 188-amino-acid polypeptide reads, in one-letter code: Protein CRIPTO3 (188 aa).

Positions 78–107 (LNRTCCLNGGTCMLESFCACPPSFYGRNCE) constitute an EGF-like domain. Asparagine 79 carries N-linked (GlcNAc...) asparagine glycosylation. Disulfide bonds link cysteine 82–cysteine 89, cysteine 83–cysteine 95, cysteine 97–cysteine 106, cysteine 115–cysteine 133, cysteine 128–cysteine 149, and cysteine 131–cysteine 140.

The protein belongs to the EGF-CFC (Cripto-1/FRL1/Cryptic) family. In terms of tissue distribution, expressed weakly in lung, colon and breast. Expressed also strongly in primary cancer tissues; lung and colon cancers.

The protein localises to the cell membrane. In terms of biological role, could play a role in the determination of the epiblastic cells that subsequently give rise to the mesoderm. Activates the Nodal-dependent signaling pathway. In Homo sapiens (Human), this protein is Protein CRIPTO3.